Reading from the N-terminus, the 631-residue chain is Mitochondrial Rho GTPase 1 (631 aa).

At 1 to 605 the chain is on the cytoplasmic side; it reads MPAGRGRPLR…TQADLKSSTF (605 aa). Residues 15–181 enclose the Miro 1 domain; it reads KKDVRILLVG…FYYAQKAVLH (167 aa). GTP-binding residues include arginine 27, glycine 29, lysine 30, threonine 31, and serine 32. Residue threonine 31 participates in Mg(2+) binding. Mg(2+)-binding residues include proline 48 and aspartate 70. Serine 72 lines the GTP pocket. Position 105 is an N6-acetyllysine (lysine 105). 5 residues coordinate GTP: asparagine 131, lysine 132, aspartate 134, alanine 162, and lysine 163. Residue lysine 166 forms a Glycyl lysine isopeptide (Lys-Gly) (interchain with G-Cter in ubiquitin) linkage. Positions 197–232 constitute an EF-hand 1 domain; that stretch reads ACIKALTRIFKISDQDNDGTLNDAELNFFQRICFNT. Aspartate 210, aspartate 212, aspartate 214, threonine 216, and glutamate 221 together coordinate Ca(2+). Residue lysine 248 forms a Glycyl lysine isopeptide (Lys-Gly) (interchain with G-Cter in ubiquitin) linkage. The EF-hand 2 domain occupies 317–352; it reads HAYLFLQSTFDKHDLDRDCALSPDELKDLFKVFPYI. The Ca(2+) site is built by aspartate 330, aspartate 332, aspartate 334, alanine 336, and glutamate 341. Residues 429 to 592 enclose the Miro 2 domain; it reads RNVFRCNVIG…FVKLTTMAMY (164 aa). 11 residues coordinate GTP: asparagine 441, cysteine 442, glycine 443, lysine 444, serine 445, glycine 446, lysine 460, lysine 541, aspartate 543, threonine 571, and cysteine 572. Position 441 (asparagine 441) interacts with Mg(2+). Residue lysine 585 forms a Glycyl lysine isopeptide (Lys-Gly) (interchain with G-Cter in ubiquitin) linkage. A helical; Anchor for type IV membrane protein transmembrane segment spans residues 606-628; it reads WLRASFGATVFAVLGFAMYKALL. The Mitochondrial intermembrane segment spans residues 629-631; the sequence is KQR.

Belongs to the mitochondrial Rho GTPase family. Homodimer. Interacts with the kinesin-binding proteins TRAK1/OIP106 and TRAK2/GRIF1, forming a link between mitochondria and the trafficking apparatus of the microtubules. Interacts with RAP1GDS1. Interacts with ARMCX1. Found in a complex with KIF5B, OGT, RHOT2 and TRAK1. Post-translationally, ubiquitinated by PRKN during mitophagy, leading to its degradation and enhancement of mitophagy. Deubiquitinated by USP30. In terms of processing, acetylation on Lys-105 decreases sensitivity of mitochondrial transport to elevated Ca(2+) levels, increases mitochondrial transport and promotes axon growth. Deacetylated by HDAC6 which blocks mitochondrial transport and mediates axon growth inhibition.

It is found in the mitochondrion outer membrane. The catalysed reaction is GTP + H2O = GDP + phosphate + H(+). It carries out the reaction ATP + H2O = ADP + phosphate + H(+). The enzyme catalyses UTP + H2O = UDP + phosphate + H(+). Atypical mitochondrial nucleoside-triphosphatase (NTPase) involved in mitochondrial trafficking. Probably involved in control of anterograde transport of mitochondria and their subcellular distribution. Promotes mitochondrial fission during high calcium conditions. Can hydrolyze GTP, ATP and UTP. This is Mitochondrial Rho GTPase 1 (RHOT1) from Bos taurus (Bovine).